Consider the following 369-residue polypeptide: Virulence factor-related M protein (369 aa).

The N-terminal stretch at 1-41 is a signal peptide; the sequence is MARQQTKKNYSLRKLKTGTASVAVALTVLGAGFANQTEVRA. C repeat units lie at residues 120–154, 162–196, and 211–246; these read AKAT…EAKH, KKLT…EAKY, and QKLE…TSEL. 4 stretches are compositionally biased toward basic and acidic residues: residues 125-165, 202-219, 228-243, and 257-271; these read ENEI…KKLT, DHQA…DLPK, LSRD…KKVT, and EESK…AELQ. Disordered regions lie at residues 125 to 189 and 202 to 271; these read ENEI…RAAK and DHQA…AELQ. The segment at 129–200 is 2 X repeats, type A; it reads SEASRKGLSR…ELEAKYQKLE (72 aa). Residues 132–241 form a 3 X repeats, type B region; it reads SRKGLSRDLE…LEASREANKK (110 aa). D repeat units follow at residues 272-277, 278-283, 286-291, and 293-298; these read AKLDAQ, GKALKE, AKQTEE, and AKLRAE. The segment covering 292 to 301 has biased composition (basic and acidic residues); sequence LAKLRAEKAA. Positions 292–341 are disordered; it reads LAKLRAEKAAGSKTPATKPANKERSGRAAQTATRPSQNKGMRSQLPSTGE. A compositionally biased stretch (polar residues) spans 319-338; it reads AAQTATRPSQNKGMRSQLPS. Residues 336-340 carry the LPXTG sorting signal motif; it reads LPSTG. The residue at position 339 (Thr-339) is a Pentaglycyl murein peptidoglycan amidated threonine. Positions 340-369 are cleaved as a propeptide — removed by sortase; sequence GEAANPFFTAAAATVMVSAGMLALKRKEEN.

Belongs to the M protein family.

The protein localises to the secreted. The protein resides in the cell wall. This Streptococcus pyogenes serotype M49 protein is Virulence factor-related M protein (ennX).